Reading from the N-terminus, the 378-residue chain is 1-acyl-sn-glycerol-3-phosphate acyltransferase delta (378 aa).

Residues 11-31 (FLCHLVFCYVFIASGLIINTV) form a helical membrane-spanning segment. Positions 96 to 101 (HKFEID) match the HXXXXD motif motif. The next 3 membrane-spanning stretches (helical) occupy residues 125 to 145 (ELAYVPIIGWMWYFTEMVFCS), 307 to 327 (TLVNWLFWASLVLYPFFQFLV), and 338 to 358 (LASFILVFFVASMGVRWMIGV).

It belongs to the 1-acyl-sn-glycerol-3-phosphate acyltransferase family.

The protein localises to the endoplasmic reticulum membrane. It carries out the reaction a 1-acyl-sn-glycero-3-phosphate + an acyl-CoA = a 1,2-diacyl-sn-glycero-3-phosphate + CoA. It catalyses the reaction (4Z,7Z,10Z,13Z,16Z,19Z)-docosahexaenoyl-CoA + 1-hexadecanoyl-sn-glycero-3-phosphate = 1-hexadecanoyl-2-(4Z,7Z,10Z,13Z,16Z,19Z-docosahexaenoyl)-sn-glycero-3-phosphate + CoA. The catalysed reaction is 1-octadecanoyl-sn-glycero-3-phosphate + (9Z,12Z)-octadecadienoyl-CoA = 1-octadecanoyl-2-(9Z,12Z-octadecadienoyl)-sn-glycero-3-phosphate + CoA. The enzyme catalyses 1-octadecanoyl-sn-glycero-3-phosphate + (4Z,7Z,10Z,13Z,16Z,19Z)-docosahexaenoyl-CoA = 1-octadecanoyl-2-(4Z,7Z,10Z,13Z,16Z,19Z-docosahexaenoyl)-sn-glycero-3-phosphate + CoA. It carries out the reaction (4Z,7Z,10Z,13Z,16Z,19Z)-docosahexaenoyl-CoA + 1-(9Z-octadecenoyl)-sn-glycero-3-phosphate = 1-(9Z-octadecenoyl)-2-(4Z,7Z,10Z,13Z,16Z,19Z-docosahexaenoyl)-sn-glycero-3-phosphate + CoA. It functions in the pathway phospholipid metabolism; CDP-diacylglycerol biosynthesis; CDP-diacylglycerol from sn-glycerol 3-phosphate: step 2/3. Converts 1-acyl-sn-glycerol-3-phosphate (lysophosphatidic acid or LPA) into 1,2-diacyl-sn-glycerol-3-phosphate (phosphatidic acid or PA) by incorporating an acyl moiety at the sn-2 position of the glycerol backbone. Exhibits high acyl-CoA specificity for polyunsaturated fatty acyl-CoA, especially docosahexaenoyl-CoA (22:6-CoA, DHA-CoA). This is 1-acyl-sn-glycerol-3-phosphate acyltransferase delta (AGPAT4) from Macaca fascicularis (Crab-eating macaque).